Reading from the N-terminus, the 71-residue chain is uncharacterized protein (71 aa).

The chain crosses the membrane as a helical span at residues 12–32; that stretch reads FLVSIAFFGLAPTIPLLAIAL.

The protein resides in the membrane. This is an uncharacterized protein from Sinorhizobium fredii (strain NBRC 101917 / NGR234).